A 482-amino-acid chain; its full sequence is Ribosomal RNA small subunit methyltransferase F (482 aa).

Residues 119 to 125 (ASAPGSK), E143, D170, and D188 contribute to the S-adenosyl-L-methionine site. C241 serves as the catalytic Nucleophile.

Belongs to the class I-like SAM-binding methyltransferase superfamily. RsmB/NOP family.

The protein localises to the cytoplasm. The enzyme catalyses cytidine(1407) in 16S rRNA + S-adenosyl-L-methionine = 5-methylcytidine(1407) in 16S rRNA + S-adenosyl-L-homocysteine + H(+). Functionally, specifically methylates the cytosine at position 1407 (m5C1407) of 16S rRNA. This Shewanella sp. (strain ANA-3) protein is Ribosomal RNA small subunit methyltransferase F.